We begin with the raw amino-acid sequence, 357 residues long: Histidinol-phosphate aminotransferase (357 aa).

Lys218 is modified (N6-(pyridoxal phosphate)lysine).

Belongs to the class-II pyridoxal-phosphate-dependent aminotransferase family. Histidinol-phosphate aminotransferase subfamily. In terms of assembly, homodimer. Pyridoxal 5'-phosphate is required as a cofactor.

The enzyme catalyses L-histidinol phosphate + 2-oxoglutarate = 3-(imidazol-4-yl)-2-oxopropyl phosphate + L-glutamate. It participates in amino-acid biosynthesis; L-histidine biosynthesis; L-histidine from 5-phospho-alpha-D-ribose 1-diphosphate: step 7/9. The protein is Histidinol-phosphate aminotransferase of Chlorobium luteolum (strain DSM 273 / BCRC 81028 / 2530) (Pelodictyon luteolum).